Consider the following 346-residue polypeptide: Parapinopsin (346 aa).

Topologically, residues 1–29 (MASIILINFSETDTLHLGSVNDHIMPRIG) are extracellular. The N-linked (GlcNAc...) asparagine glycan is linked to Asn-8. Residues 30-54 (YTILSIIMALSSTFGIILNMVVIIV) traverse the membrane as a helical segment. The Cytoplasmic portion of the chain corresponds to 55–66 (TVRYKQLRQPLN). A helical transmembrane segment spans residues 67-91 (YALVNLAVADLGCPVFGGLLTAVTN). Residues 92-106 (AMGYFSLGRVGCVLE) lie on the Extracellular side of the membrane. Cysteines 103 and 180 form a disulfide. A helical transmembrane segment spans residues 107–126 (GFAVAFFGIAGLCSVAVIAV). Residues 127 to 145 (DRYMVVCRPLGAVMFQTKH) are Cytoplasmic-facing. The chain crosses the membrane as a helical span at residues 146-169 (ALAGVVFSWVWSFIWNTPPLFGWG). Over 170–193 (SYQLEGVMTSCAPNWYRRDPVNVS) the chain is Extracellular. An N-linked (GlcNAc...) asparagine glycan is attached at Asn-191. A helical transmembrane segment spans residues 194 to 221 (YILCYFMLCFALPFATIIFSYMHLLHTL). Over 222-244 (WQVAKLQVADSGSTAKVEVQVAR) the chain is Cytoplasmic. Residues 245-268 (MVVIMVMAFLLTWLPYAAFALTVI) form a helical membrane-spanning segment. Over 269 to 276 (IDSNIYIN) the chain is Extracellular. The chain crosses the membrane as a helical span at residues 277–301 (PVIGTIPAYLAKSSTVFNPIIYIFM). Lys-288 is modified (N6-(retinylidene)lysine). Topologically, residues 302–346 (NRQFRDYALPCLLCGKNPWAAKEGRDSDTNTLTTTVSKNTSVSPL) are cytoplasmic. Cys-315 is lipidated: S-palmitoyl cysteine. The segment at 325–346 (GRDSDTNTLTTTVSKNTSVSPL) is disordered. The segment covering 330 to 346 (TNTLTTTVSKNTSVSPL) has biased composition (low complexity).

This sequence belongs to the G-protein coupled receptor 1 family. Opsin subfamily. In terms of processing, phosphorylated on some or all of the serine and threonine residues present in the C-terminal region. In terms of tissue distribution, parapineal organ.

It localises to the membrane. The chain is Parapinopsin from Ictalurus punctatus (Channel catfish).